Consider the following 321-residue polypeptide: Acetyl-coenzyme A carboxylase carboxyl transferase subunit alpha (321 aa).

In terms of domain architecture, CoA carboxyltransferase C-terminal spans 32–293 (DISEEIARLQ…KRVLQDQLKE (262 aa)).

The protein belongs to the AccA family. In terms of assembly, acetyl-CoA carboxylase is a heterohexamer composed of biotin carboxyl carrier protein (AccB), biotin carboxylase (AccC) and two subunits each of ACCase subunit alpha (AccA) and ACCase subunit beta (AccD).

The protein resides in the cytoplasm. The enzyme catalyses N(6)-carboxybiotinyl-L-lysyl-[protein] + acetyl-CoA = N(6)-biotinyl-L-lysyl-[protein] + malonyl-CoA. It participates in lipid metabolism; malonyl-CoA biosynthesis; malonyl-CoA from acetyl-CoA: step 1/1. Component of the acetyl coenzyme A carboxylase (ACC) complex. First, biotin carboxylase catalyzes the carboxylation of biotin on its carrier protein (BCCP) and then the CO(2) group is transferred by the carboxyltransferase to acetyl-CoA to form malonyl-CoA. The chain is Acetyl-coenzyme A carboxylase carboxyl transferase subunit alpha from Chromobacterium violaceum (strain ATCC 12472 / DSM 30191 / JCM 1249 / CCUG 213 / NBRC 12614 / NCIMB 9131 / NCTC 9757 / MK).